A 521-amino-acid chain; its full sequence is MSDTEDLAALNDRLMAKNHALAEALSRAGKELTKAKSQLAQLAQPPLTFATMVKVDSTRTDEDGIQHASAEVISGTRRMVVPVASNVNAARLTAGATVMLNEKLVLVEQRDADTVGQIRSVKQVLDDGRLIVTDASGNPVLIRRSGALAYAGINQGDRIIIDPSVRLAIEALPAEGDKDLVLEETPDVTFADIGGLDSEIGRIRDAVQLPFQHRALFERYDLKPPKGVLLYGPPGNGKTMIAKAVANALCEGGYDSNGDGAISPAETHVKGVFLSVKGPELLNKYVGESERLIRLIFQRARERAADGNPVVVFIDEMDSLLRTRGSGVSSDVETTIVPQFLSELDGVESLDNVMVIGASNRVDMIDPAVLRPGRLDVKIRVGRPKTNQAIAIVDHYLTDDLPLEDGVDAHALSAVLVHDIYGTSERRHLCDVQEENGQWHALFLADVVSGAMLKNIVDRAKTRAVKESIETGLDVALTVPLLAAAVEDEYRETRDSMADVDPEQWSRINGMDPIRRIRTAE.

Positions 4-44 (TEDLAALNDRLMAKNHALAEALSRAGKELTKAKSQLAQLAQ) form a coiled coil. 235 to 240 (GNGKTM) serves as a coordination point for ATP.

The protein belongs to the AAA ATPase family. As to quaternary structure, homohexamer. Assembles into a hexameric ring structure.

The sequence is that of AAA ATPase forming ring-shaped complexes from Bifidobacterium longum (strain DJO10A).